A 225-amino-acid polypeptide reads, in one-letter code: ATP synthase subunit a (225 aa).

Transmembrane regions (helical) follow at residues 16–36 (LFVY…VAKL), 79–99 (LVAT…IPGF), 105–125 (SLNL…FEGI), 176–196 (LFLL…AYAL), and 202–222 (VLQT…AVAI).

The protein belongs to the ATPase A chain family. In terms of assembly, F-type ATPases have 2 components, CF(1) - the catalytic core - and CF(0) - the membrane proton channel. CF(1) has five subunits: alpha(3), beta(3), gamma(1), delta(1), epsilon(1). CF(0) has three main subunits: a(1), b(2) and c(9-12). The alpha and beta chains form an alternating ring which encloses part of the gamma chain. CF(1) is attached to CF(0) by a central stalk formed by the gamma and epsilon chains, while a peripheral stalk is formed by the delta and b chains.

It localises to the cell inner membrane. In terms of biological role, key component of the proton channel; it plays a direct role in the translocation of protons across the membrane. This Campylobacter curvus (strain 525.92) protein is ATP synthase subunit a.